The sequence spans 339 residues: Holliday junction branch migration complex subunit RuvB (339 aa).

Residues 1-180 are large ATPase domain (RuvB-L); the sequence is MTRTITPDMT…FGVISRLEFY (180 aa). ATP-binding positions include Leu19, Arg20, Gly61, Lys64, Thr65, Thr66, 127–129, Arg170, Tyr180, and Arg217; that span reads EDF. Mg(2+) is bound at residue Thr65. The segment at 181–251 is small ATPAse domain (RuvB-S); it reads TIEELAFIIT…VVQDALALLE (71 aa). Residues 254 to 339 form a head domain (RuvB-H) region; that stretch reads HMGFDYMDRM…EPPQGKLFQD (86 aa). DNA-binding residues include Arg309 and Arg314.

It belongs to the RuvB family. Homohexamer. Forms an RuvA(8)-RuvB(12)-Holliday junction (HJ) complex. HJ DNA is sandwiched between 2 RuvA tetramers; dsDNA enters through RuvA and exits via RuvB. An RuvB hexamer assembles on each DNA strand where it exits the tetramer. Each RuvB hexamer is contacted by two RuvA subunits (via domain III) on 2 adjacent RuvB subunits; this complex drives branch migration. In the full resolvosome a probable DNA-RuvA(4)-RuvB(12)-RuvC(2) complex forms which resolves the HJ.

The protein localises to the cytoplasm. The enzyme catalyses ATP + H2O = ADP + phosphate + H(+). The RuvA-RuvB-RuvC complex processes Holliday junction (HJ) DNA during genetic recombination and DNA repair, while the RuvA-RuvB complex plays an important role in the rescue of blocked DNA replication forks via replication fork reversal (RFR). RuvA specifically binds to HJ cruciform DNA, conferring on it an open structure. The RuvB hexamer acts as an ATP-dependent pump, pulling dsDNA into and through the RuvAB complex. RuvB forms 2 homohexamers on either side of HJ DNA bound by 1 or 2 RuvA tetramers; 4 subunits per hexamer contact DNA at a time. Coordinated motions by a converter formed by DNA-disengaged RuvB subunits stimulates ATP hydrolysis and nucleotide exchange. Immobilization of the converter enables RuvB to convert the ATP-contained energy into a lever motion, pulling 2 nucleotides of DNA out of the RuvA tetramer per ATP hydrolyzed, thus driving DNA branch migration. The RuvB motors rotate together with the DNA substrate, which together with the progressing nucleotide cycle form the mechanistic basis for DNA recombination by continuous HJ branch migration. Branch migration allows RuvC to scan DNA until it finds its consensus sequence, where it cleaves and resolves cruciform DNA. The polypeptide is Holliday junction branch migration complex subunit RuvB (Geotalea daltonii (strain DSM 22248 / JCM 15807 / FRC-32) (Geobacter daltonii)).